Reading from the N-terminus, the 450-residue chain is MRLFGTAGIRGTLWEKVTPELAMKVGMAVGTYKSGKALVGRDGRTSSVMLKNAMISGLLSTGMEVLDADLIPTPALAWGTRKLADAGVMITASHNPPTDNGVKVFNGDGTEFYVEQERGLEEIIFSGNFRKARWDEIKPVRNVEVIPDYINAVLDFVGHETNLKVLYDGANGAGSLVAPYLLREMGAKVLSVNAHVDGHFPGRKPEPRYENIAYLGKLVRELGVDLAIAQDGDADRIAVFDEKGNYVDEDTVIALFAKLYVEEHGGGTVVVSIDTGSRIDAVVERAGGRVVRIPLGQPHDGIKRYKAIFAAEPWKLVHPKFGPWIDPFVTMGLLIKLIDENGPLSELVKEIPTYYLKKANVLCPDEYKAEVVRRAAEEVERKLSSEIKEVLTISGFRIALNDGSWILIRPSGTEPKIRVVAEAPTEKRRDELFEMAYSTVSRIVKEAEKK.

The active-site Phosphoserine intermediate is serine 93. Serine 93, aspartate 231, aspartate 233, and aspartate 235 together coordinate Mg(2+). At serine 93 the chain carries Phosphoserine; by autocatalysis.

This sequence belongs to the phosphohexose mutase family. As to quaternary structure, homotetramer. The cofactor is Mg(2+). Activated by phosphorylation.

The catalysed reaction is alpha-D-ribose 1-phosphate = D-ribose 5-phosphate. It catalyses the reaction 2-deoxy-alpha-D-ribose 1-phosphate = 2-deoxy-D-ribose 5-phosphate. Functionally, catalyzes the conversion of deoxyribose 1-phosphate to deoxyribose 5-phosphate. Also shows weak activity with glucose 1-phosphate and mannose 1-phosphate. Could be involved in pentose biosynthesis. This is Phosphopentomutase from Thermococcus kodakarensis (strain ATCC BAA-918 / JCM 12380 / KOD1) (Pyrococcus kodakaraensis (strain KOD1)).